A 186-amino-acid polypeptide reads, in one-letter code: Heat shock protein 23 (186 aa).

Positions 53–161 constitute a sHSP domain; sequence VGASSGSSGA…KGNERIVQIQ (109 aa). The tract at residues 163-186 is disordered; sequence VGPAHLNVKENPKEAVEQDNGNDK. Residues 169–186 are compositionally biased toward basic and acidic residues; the sequence is NVKENPKEAVEQDNGNDK.

It belongs to the small heat shock protein (HSP20) family.

In Drosophila melanogaster (Fruit fly), this protein is Heat shock protein 23 (Hsp23).